The sequence spans 278 residues: Large ribosomal subunit protein uL2 (278 aa).

Basic residues predominate over residues asparagine 212–asparagine 221. Positions asparagine 212–lysine 278 are disordered.

Belongs to the universal ribosomal protein uL2 family. As to quaternary structure, part of the 50S ribosomal subunit. Forms a bridge to the 30S subunit in the 70S ribosome.

One of the primary rRNA binding proteins. Required for association of the 30S and 50S subunits to form the 70S ribosome, for tRNA binding and peptide bond formation. It has been suggested to have peptidyltransferase activity; this is somewhat controversial. Makes several contacts with the 16S rRNA in the 70S ribosome. The protein is Large ribosomal subunit protein uL2 of Methylorubrum populi (strain ATCC BAA-705 / NCIMB 13946 / BJ001) (Methylobacterium populi).